The sequence spans 396 residues: dTDP-epi-vancosaminyltransferase (396 aa).

10–12 (SRG) serves as a coordination point for dTDP-beta-L-4-epi-vancosamine. Devancoaminyl-vancomycin-binding residues include Asp127, Gln133, Tyr141, and Tyr169. DTDP-beta-L-4-epi-vancosamine-binding positions include Arg207, Ser230, 277 to 278 (EV), and 293 to 298 (HDSAGT).

This sequence belongs to the glycosyltransferase 28 family.

The catalysed reaction is dTDP-beta-L-4-epi-vancosamine + devancoaminyl-vancomycin = chloroorienticin B + dTDP + H(+). The protein operates within antibiotic biosynthesis; vancomycin biosynthesis. Its function is as follows. Catalyzes the attachment of 4-epi-vancosamine from a TDP donor to the beta-OH-Tyr-6 of the aglycone cosubstrate in the biosynthesis of glycopeptide antibiotic chloroeremomycin, a member of the vancomycin group of antibiotics. Strongly prefers devancoaminyl-vancomycin (DVV) as substrate rather than the heptapeptide vancomycin aglycone (AGV). Acts downstream of GtfB. The chain is dTDP-epi-vancosaminyltransferase (gtfA) from Amycolatopsis orientalis (Nocardia orientalis).